A 64-amino-acid chain; its full sequence is H/ACA ribonucleoprotein complex subunit 3-like protein (64 aa).

It belongs to the NOP10 family. As to quaternary structure, component of the small nucleolar ribonucleoprotein particles containing H/ACA-type snoRNAs (H/ACA snoRNPs).

It is found in the nucleus. The protein localises to the nucleolus. Required for ribosome biogenesis. Part of a complex which catalyzes pseudouridylation of rRNA. This involves the isomerization of uridine such that the ribose is subsequently attached to C5, instead of the normal N1. Pseudouridine ('psi') residues may serve to stabilize the conformation of rRNAs. The polypeptide is H/ACA ribonucleoprotein complex subunit 3-like protein (Arabidopsis thaliana (Mouse-ear cress)).